The chain runs to 443 residues: Glutamate--tRNA ligase 2 (443 aa).

A 'HIGH' region motif is present at residues 7-17 (PSPTGLIHVGN). The short motif at 240-244 (KLSKR) is the 'KMSKS' region element. Lys-243 serves as a coordination point for ATP.

It belongs to the class-I aminoacyl-tRNA synthetase family. Glutamate--tRNA ligase type 1 subfamily. In terms of assembly, monomer.

The protein resides in the cytoplasm. It catalyses the reaction tRNA(Glu) + L-glutamate + ATP = L-glutamyl-tRNA(Glu) + AMP + diphosphate. Its function is as follows. Catalyzes the attachment of glutamate to tRNA(Glu) in a two-step reaction: glutamate is first activated by ATP to form Glu-AMP and then transferred to the acceptor end of tRNA(Glu). The sequence is that of Glutamate--tRNA ligase 2 from Gluconacetobacter diazotrophicus (strain ATCC 49037 / DSM 5601 / CCUG 37298 / CIP 103539 / LMG 7603 / PAl5).